Here is a 143-residue protein sequence, read N- to C-terminus: MREFRRVRRVRFAACALVAAATGITLAAGPASADIPIGQKMTGKMTYYTDKGYGACGTPIDASSQDLVAIPAAWWTTPNPNNDPLCRGVSVEVSYNGRTIRVPVRDKCPSCDRTHIDLSQAAFAKLAPLDRGVVNGITWKFVR.

The first 33 residues, 1–33 (MREFRRVRRVRFAACALVAAATGITLAAGPASA), serve as a signal peptide directing secretion.

As to quaternary structure, monomer.

Its subcellular location is the secreted. Its function is as follows. Stress protein produced under hyperthermal stress conditions. Serves as a glutamine and lysine donor substrate for transglutaminase. Inhibits the cysteine proteases papain and bromelain as well as the bovine serine protease trypsin. Has hardly any or no effect on subtilisin, bovine chymotrypsin, proteinase K from T.album, transglutaminase-activating metalloproteinase (TAMEP) from S.mobaraensis, dispase from B.polymyxa, thermolysin from B.thermoproteolyticus or collagenase from C.histolyticum. This is Papain inhibitor (pi) from Streptomyces mobaraensis (Streptoverticillium mobaraense).